The primary structure comprises 392 residues: Formate-dependent phosphoribosylglycinamide formyltransferase (392 aa).

N(1)-(5-phospho-beta-D-ribosyl)glycinamide-binding positions include 22–23 and Glu82; that span reads EL. Residues Arg114, Lys155, 160–165, 195–198, and Glu203 each bind ATP; these read SSGKGQ and EGVV. Positions 119–308 constitute an ATP-grasp domain; the sequence is RLAAEELGLP…EFALHVRAFL (190 aa). Mg(2+)-binding residues include Glu267 and Glu279. Residues Asp286, Lys355, and 362 to 363 each bind N(1)-(5-phospho-beta-D-ribosyl)glycinamide; that span reads RR.

The protein belongs to the PurK/PurT family. Homodimer.

It catalyses the reaction N(1)-(5-phospho-beta-D-ribosyl)glycinamide + formate + ATP = N(2)-formyl-N(1)-(5-phospho-beta-D-ribosyl)glycinamide + ADP + phosphate + H(+). The protein operates within purine metabolism; IMP biosynthesis via de novo pathway; N(2)-formyl-N(1)-(5-phospho-D-ribosyl)glycinamide from N(1)-(5-phospho-D-ribosyl)glycinamide (formate route): step 1/1. In terms of biological role, involved in the de novo purine biosynthesis. Catalyzes the transfer of formate to 5-phospho-ribosyl-glycinamide (GAR), producing 5-phospho-ribosyl-N-formylglycinamide (FGAR). Formate is provided by PurU via hydrolysis of 10-formyl-tetrahydrofolate. In Salmonella typhimurium (strain LT2 / SGSC1412 / ATCC 700720), this protein is Formate-dependent phosphoribosylglycinamide formyltransferase.